Here is a 167-residue protein sequence, read N- to C-terminus: Leptin (167 aa).

The signal sequence occupies residues 1-21 (MHCVPLFCFLWFCHHLYYSQA). An intrachain disulfide couples C117 to C167.

It belongs to the leptin family.

Its subcellular location is the secreted. In terms of biological role, key player in the regulation of energy balance and body weight control. Once released into the circulation, has central and peripheral effects by binding LEPR, found in many tissues, which results in the activation of several major signaling pathways. In the hypothalamus, acts as an appetite-regulating factor that induces a decrease in food intake and an increase in energy consumption by inducing anorexinogenic factors and suppressing orexigenic neuropeptides, also regulates bone mass and secretion of hypothalamo-pituitary-adrenal hormones. In the periphery, increases basal metabolism, influences reproductive function, regulates pancreatic beta-cell function and insulin secretion, is pro-angiogenic for endothelial cell and affects innate and adaptive immunity. In the arcuate nucleus of the hypothalamus, activates by depolarization POMC neurons inducing FOS and SOCS3 expression to release anorexigenic peptides and inhibits by hyperpolarization NPY neurons inducing SOCS3 with a consequent reduction on release of orexigenic peptides. In addition to its known satiety inducing effect, has a modulatory role in nutrient absorption. In the intestine, reduces glucose absorption by enterocytes by activating PKC and leading to a sequential activation of p38, PI3K and ERK signaling pathways which exerts an inhibitory effect on glucose absorption. Acts as a growth factor on certain tissues, through the activation of different signaling pathways increases expression of genes involved in cell cycle regulation such as CCND1, via JAK2-STAT3 pathway, or VEGFA, via MAPK1/3 and PI3K-AKT1 pathways. May also play an apoptotic role via JAK2-STAT3 pathway and up-regulation of BIRC5 expression. Pro-angiogenic, has mitogenic activity on vascular endothelial cells and plays a role in matrix remodeling by regulating the expression of matrix metalloproteinases (MMPs) and tissue inhibitors of metalloproteinases (TIMPs). In innate immunity, modulates the activity and function of neutrophils by increasing chemotaxis and the secretion of oxygen radicals. Increases phagocytosis by macrophages and enhances secretion of pro-inflammatory mediators. Increases cytotoxic ability of NK cells. Plays a pro-inflammatory role, in synergy with IL1B, by inducing NOS2 which promotes the production of IL6, IL8 and Prostaglandin E2, through a signaling pathway that involves JAK2, PI3K, MAP2K1/MEK1 and MAPK14/p38. In adaptive immunity, promotes the switch of memory T-cells towards T helper-1 cell immune responses. Increases CD4(+)CD25(-) T-cell proliferation and reduces autophagy during TCR (T-cell receptor) stimulation, through MTOR signaling pathway activation and BCL2 up-regulation. This is Leptin (LEP) from Sminthopsis crassicaudata (Fat-tailed dunnart).